The chain runs to 109 residues: Probable endoribonuclease MazF5 (109 aa).

The protein belongs to the PemK/MazF family. As to quaternary structure, forms a complex with cognate antitoxin MazE5.

In terms of biological role, toxic component of a type II toxin-antitoxin (TA) system. Upon expression in M.smegmatis inhibits colony formation. Its toxic effect is neutralized by coexpression with cognate antitoxin MazE5. Probably an endoribonuclease. The protein is Probable endoribonuclease MazF5 (mazF5) of Mycobacterium tuberculosis (strain ATCC 25618 / H37Rv).